Consider the following 329-residue polypeptide: Serine dehydratase-like (329 aa).

At Met-1 the chain carries N-acetylmethionine. Lys-48 carries the post-translational modification N6-(pyridoxal phosphate)lysine.

This sequence belongs to the serine/threonine dehydratase family. In terms of assembly, monomer. Homodimer. Pyridoxal 5'-phosphate serves as cofactor.

The catalysed reaction is L-serine = pyruvate + NH4(+). The enzyme catalyses L-threonine = 2-oxobutanoate + NH4(+). It catalyses the reaction L-glutamate = D-glutamate. Serine dehydratase activity is inhibited by manganese chloride, ferrous chloride, cobalt chloride, cupric chloride, nickel chloride and zinc chloride. Glutamate racemase activity is inhibited by manganese chloride, ferrous chloride, cupric chloride and zinc chloride. Catalyzes the pyridoxal-phosphate-dependent dehydrative deamination of L-threonine and L-serine to ammonia and alpha-ketobutyrate and pyruvate, respectively. Also exhibits racemase activity towards L-glutamate and D-glutamate. The chain is Serine dehydratase-like (Sdsl) from Rattus norvegicus (Rat).